Reading from the N-terminus, the 420-residue chain is UDP-N-acetylglucosamine 1-carboxyvinyltransferase 2 (420 aa).

Position 22-23 (22-23) interacts with phosphoenolpyruvate; it reads KN. R92 serves as a coordination point for UDP-N-acetyl-alpha-D-glucosamine. C116 functions as the Proton donor in the catalytic mechanism. A 2-(S-cysteinyl)pyruvic acid O-phosphothioketal modification is found at C116. UDP-N-acetyl-alpha-D-glucosamine-binding positions include 121–125, D307, and I329; that span reads RPIDL.

This sequence belongs to the EPSP synthase family. MurA subfamily.

It localises to the cytoplasm. It catalyses the reaction phosphoenolpyruvate + UDP-N-acetyl-alpha-D-glucosamine = UDP-N-acetyl-3-O-(1-carboxyvinyl)-alpha-D-glucosamine + phosphate. Its pathway is cell wall biogenesis; peptidoglycan biosynthesis. Its function is as follows. Cell wall formation. Adds enolpyruvyl to UDP-N-acetylglucosamine. The chain is UDP-N-acetylglucosamine 1-carboxyvinyltransferase 2 from Streptococcus thermophilus (strain CNRZ 1066).